The following is a 153-amino-acid chain: Ribosome maturation factor RimP (153 aa).

Belongs to the RimP family.

It is found in the cytoplasm. Required for maturation of 30S ribosomal subunits. The chain is Ribosome maturation factor RimP from Vesicomyosocius okutanii subsp. Calyptogena okutanii (strain HA).